The following is a 91-amino-acid chain: Small ribosomal subunit protein bS18 (91 aa).

The interval methionine 1–arginine 21 is disordered. Residues glycine 12–arginine 21 show a composition bias toward basic residues.

This sequence belongs to the bacterial ribosomal protein bS18 family. As to quaternary structure, part of the 30S ribosomal subunit. Forms a tight heterodimer with protein bS6.

Its function is as follows. Binds as a heterodimer with protein bS6 to the central domain of the 16S rRNA, where it helps stabilize the platform of the 30S subunit. The sequence is that of Small ribosomal subunit protein bS18 from Geotalea daltonii (strain DSM 22248 / JCM 15807 / FRC-32) (Geobacter daltonii).